We begin with the raw amino-acid sequence, 607 residues long: NADH-ubiquinone oxidoreductase chain 5 (607 aa).

16 helical membrane passes run 3–23 (IFTT…LISM), 35–55 (YTTT…LMFF), 84–104 (FFSI…MQFS), 117–137 (FIKY…ANNM), 140–160 (LFIG…WWYG), 171–191 (AILY…WFSL), 210–230 (LIPL…FGLH), 241–261 (TPVS…FLLV), 272–292 (FILT…AICA), 301–320 (IIAF…LGMN), 324–344 (LAFL…MCSG), 365–385 (IMPF…GMPF), 405–427 (NAWA…MRII), 457–477 (LAFG…PTSI), 482–502 (MPWF…LIAL), and 586–606 (LYFM…SINL).

It belongs to the complex I subunit 5 family. As to quaternary structure, core subunit of respiratory chain NADH dehydrogenase (Complex I) which is composed of 45 different subunits.

It is found in the mitochondrion inner membrane. The enzyme catalyses a ubiquinone + NADH + 5 H(+)(in) = a ubiquinol + NAD(+) + 4 H(+)(out). Its function is as follows. Core subunit of the mitochondrial membrane respiratory chain NADH dehydrogenase (Complex I) which catalyzes electron transfer from NADH through the respiratory chain, using ubiquinone as an electron acceptor. Essential for the catalytic activity and assembly of complex I. The polypeptide is NADH-ubiquinone oxidoreductase chain 5 (Mtnd5) (Mus musculus (Mouse)).